A 393-amino-acid chain; its full sequence is Chorismate synthase (393 aa).

2 residues coordinate NADP(+): arginine 40 and arginine 46. FMN contacts are provided by residues 129–131 (RAS), 250–251 (QA), glycine 301, 316–320 (KPIST), and arginine 342.

The protein belongs to the chorismate synthase family. Homotetramer. FMNH2 is required as a cofactor.

It catalyses the reaction 5-O-(1-carboxyvinyl)-3-phosphoshikimate = chorismate + phosphate. The protein operates within metabolic intermediate biosynthesis; chorismate biosynthesis; chorismate from D-erythrose 4-phosphate and phosphoenolpyruvate: step 7/7. Its function is as follows. Catalyzes the anti-1,4-elimination of the C-3 phosphate and the C-6 proR hydrogen from 5-enolpyruvylshikimate-3-phosphate (EPSP) to yield chorismate, which is the branch point compound that serves as the starting substrate for the three terminal pathways of aromatic amino acid biosynthesis. This reaction introduces a second double bond into the aromatic ring system. This chain is Chorismate synthase, found in Acidobacterium capsulatum (strain ATCC 51196 / DSM 11244 / BCRC 80197 / JCM 7670 / NBRC 15755 / NCIMB 13165 / 161).